The chain runs to 90 residues: Small ribosomal subunit protein bS20 (90 aa).

The protein belongs to the bacterial ribosomal protein bS20 family.

Functionally, binds directly to 16S ribosomal RNA. This chain is Small ribosomal subunit protein bS20, found in Rickettsia canadensis (strain McKiel).